The sequence spans 184 residues: Ribosome maturation factor RimP (184 aa).

The protein belongs to the RimP family.

The protein resides in the cytoplasm. Functionally, required for maturation of 30S ribosomal subunits. This Zymomonas mobilis subsp. mobilis (strain ATCC 31821 / ZM4 / CP4) protein is Ribosome maturation factor RimP.